The primary structure comprises 573 residues: LysM domain-containing protein ARB_01155/01156 (573 aa).

An N-terminal signal peptide occupies residues 1–18; sequence MIPRNLISGLFLLPFVVA. Asparagine 46, asparagine 71, and asparagine 283 each carry an N-linked (GlcNAc...) asparagine glycan. The 47-residue stretch at 373–419 folds into the LysM domain; the sequence is RYYEVVAGDQCNTIALHFGITVDAFLSLNTQIDERCSNLWIAYAYCV. The interval 375-405 is lysM domain; the sequence is YEVVAGDQCNTIALHFGITVDAFLSLNTQID.

It localises to the secreted. In terms of biological role, might have a role in sequestration of chitin oligosaccharides (breakdown products of fungal cell walls that are released during invasion and act as triggers of host immunity) to dampen host defense. This Arthroderma benhamiae (strain ATCC MYA-4681 / CBS 112371) (Trichophyton mentagrophytes) protein is LysM domain-containing protein ARB_01155/01156.